A 379-amino-acid polypeptide reads, in one-letter code: MGYARKVGWVTAGLVIGAGACYCIYRLTRGRKQNKEKMAEGGSGDVDDAGDCSGARYNDWSDDDDDSNESKSIVWYPPWARIGTEAGTRARARARARATRARRAVQKRASPNSDDTVLSPQELQKVLCLVEMSEKPYILEAALIALGNNAAYAFNRDIIRDLGGLPIVAKILNTRDPIVKEKALIVLNNLSVNAENQRRLKVYMNQVCDDTVTSRLNSSVQLAGLRLLTNMTVTNEYQHILANSISDFFRLFSAGNEETKLQVLKLLLNLAENPAMTRELLRAQVPSSLGSLFNKKEYKEVILKLLIIFENINDNFKWEENEPAQNHFSEGSLFFFLKEFQVCADKVLGIESRHDFQVRVKVGKFVAKLTERMFPKSQE.

At 1-6 (MGYARK) the chain is on the mitochondrial intermembrane side. Mitochondrion outer membrane (MOM)-targeting sequence regions lie at residues 1–6 (MGYARK) and 26–37 (RLTRGRKQNKEK). A helical; Signal-anchor membrane pass occupies residues 7-29 (VGWVTAGLVIGAGACYCIYRLTR). The Cytoplasmic segment spans residues 30 to 379 (GRKQNKEKMA…TERMFPKSQE (350 aa)). A phosphoserine mark is found at Ser61, Ser67, and Ser72. Residues 89 to 98 (RARARARARA) are nuclear localization signal. Residues 95–106 (RARATRARRAVQ) are compositionally biased toward basic residues. Positions 95–116 (RARATRARRAVQKRASPNSDDT) are disordered. Ser110 is subject to Phosphoserine. 3 ARM repeats span residues 111–151 (PNSD…NNAA), 153–192 (AFNRDIIRDLGGLPIVAKILNTRDPIVKEKALIVLNNLSV), and 233–272 (VTNEYQHILANSISDFFRLFSAGNEETKLQVLKLLLNLAE).

It belongs to the eutherian X-chromosome-specific Armcx family. In terms of assembly, interacts (via ARM domain) with MIRO1, MIRO2 and TRAK2. The interaction with Miro is calcium-dependent. Interacts with Sox10. Highly expressed in the developing neural tissues, neural crest derivatives and hind limbs. Also widely expressed in the adult nervous tissue, especially in the forebrain, including the cerebral cortex, hippocampus and thalamus.

It localises to the mitochondrion outer membrane. The protein resides in the cytoplasm. The protein localises to the nucleus. Regulates mitochondrial aggregation and transport in axons in living neurons. May link mitochondria to the Trak2-kinesin motor complex via its interaction with Miro and Trak2. Mitochondrial distribution and dynamics is regulated through Armcx3 protein degradation, which is promoted by PCK and negatively regulated by Wnt1. Enhances the Sox10-mediated transactivation of the neuronal acetylcholine receptor subunit alpha-3 and beta-4 subunit gene promoters. This is Armadillo repeat-containing X-linked protein 3 (Armcx3) from Mus musculus (Mouse).